Consider the following 268-residue polypeptide: Phosphatidylglycerol--prolipoprotein diacylglyceryl transferase (268 aa).

7 consecutive transmembrane segments (helical) span residues 21 to 41 (WYGI…GRFA), 54 to 74 (FAII…VFVL), 93 to 113 (GLAI…YLPM), 122 to 142 (ADVV…GNFF), 173 to 193 (VMHP…GILL), 203 to 223 (GVVF…IESI), and 236 to 256 (VAQL…AWFL). Arginine 137 contacts a 1,2-diacyl-sn-glycero-3-phospho-(1'-sn-glycerol).

The protein belongs to the Lgt family.

It is found in the cell membrane. The enzyme catalyses L-cysteinyl-[prolipoprotein] + a 1,2-diacyl-sn-glycero-3-phospho-(1'-sn-glycerol) = an S-1,2-diacyl-sn-glyceryl-L-cysteinyl-[prolipoprotein] + sn-glycerol 1-phosphate + H(+). It participates in protein modification; lipoprotein biosynthesis (diacylglyceryl transfer). Functionally, catalyzes the transfer of the diacylglyceryl group from phosphatidylglycerol to the sulfhydryl group of the N-terminal cysteine of a prolipoprotein, the first step in the formation of mature lipoproteins. This is Phosphatidylglycerol--prolipoprotein diacylglyceryl transferase from Symbiobacterium thermophilum (strain DSM 24528 / JCM 14929 / IAM 14863 / T).